Consider the following 991-residue polypeptide: Glutamate receptor 1 (991 aa).

The N-terminal stretch at 1–27 is a signal peptide; it reads MHSRLKFLAYLHFICASSIFWPEFSSA. At 28–611 the chain is on the extracellular side; it reads QQQQQTVSLT…VFSFLNPLSQ (584 aa). N-linked (GlcNAc...) asparagine glycans are attached at residues N67, N195, N208, and N281. Disordered regions lie at residues 300–321 and 354–379; these read DSRK…GPNS and FRSN…NESS. The span at 308–318 shows a compositional bias: polar residues; that stretch reads SGQSQSQNAGG. Over residues 365–379 the composition is skewed to low complexity; it reads GGSSSSSATGTNESS. N-linked (GlcNAc...) asparagine glycans are attached at residues N376, N385, N426, N437, and N477. Residues 612–632 form a helical membrane-spanning segment; it reads EIWISVILSYVGVSFVLYFVT. Over 633-710 the chain is Cytoplasmic; it reads RFPPYEWRIV…PSIAGRIAAA (78 aa). Residues 711 to 731 traverse the membrane as a helical segment; that stretch reads VWWFFTIILISSYTANLAAFL. The Extracellular portion of the chain corresponds to 732–895; sequence TVERMVAPIK…STPNELSLSN (164 aa). Residues 896-916 traverse the membrane as a helical segment; it reads VAGIYYILIGGLLLAVIVAIM. Residues 917 to 991 lie on the Cytoplasmic side of the membrane; sequence EFFCRNKTPQ…ASNVRYQYSM (75 aa).

The protein belongs to the glutamate-gated ion channel (TC 1.A.10.1) family. In terms of assembly, homooligomer. Central nervous system.

The protein localises to the cell membrane. It localises to the postsynaptic cell membrane. Its function is as follows. Receptor for glutamate. L-glutamate acts as an excitatory neurotransmitter at many synapses in the central nervous system. The postsynaptic actions of Glu are mediated by a variety of receptors that are named according to their selective agonists. Forms ligand-gated ion channels which are activated by kainate. The chain is Glutamate receptor 1 (GluRIA) from Drosophila melanogaster (Fruit fly).